The chain runs to 159 residues: Trafficking protein particle complex subunit 6A (159 aa).

Phosphoserine is present on Ser-33.

Belongs to the TRAPP small subunits family. BET3 subfamily. As to quaternary structure, part of the multisubunit transport protein particle (TRAPP) complex. Heterodimer with TRAPPC3. The heterodimer TRAPPC3-TRAPPC6A interacts with TRAPPC2L. Interacts with TRAPPC2L.

The protein localises to the golgi apparatus. It is found in the cis-Golgi network. Its subcellular location is the endoplasmic reticulum. In terms of biological role, may play a role in vesicular transport during the biogenesis of melanosomes. The sequence is that of Trafficking protein particle complex subunit 6A from Bos taurus (Bovine).